The sequence spans 435 residues: MHYCVLSAFLLLHLVTVALSLSTCSTLDMDQFMRKRIEAIRGQILSKLKLTSPPEDYPEPEEVPPEVISIYNSTRDLLQEKASRRAAACERERSDEEYYAKEVYKIDMPPFFPSENAIPPTFYRPYFRIVRFDVSAMEKNASNLVKAEFRVFRLQNPKARVAEQRIELYQILKSKDLTSPTQRYIDSKVVKTRAEGEWLSFDVTDAVHEWLHHKDRNLGFKISLHCPCCTFVPSNNYIIPNKSEELEARFAGIDGTSTYTSGDQKTIKSTRKKNSGKTPHLLLMLLPSYGLESQQSNRRKKRALDAAYCFRNVQDNCCLRPLYIDFKRDLGWKWIHEPKGYNANFCAGACPYLWSSDTQHSRVLSLYNTINPEASASPCCVSQDLEPLTILYYIGKTPKIEQLSNMIVKSCKCSKTKLAAFARLYHSHSNLGSET.

Residues 1 to 20 (MHYCVLSAFLLLHLVTVALS) form the signal peptide. N-linked (GlcNAc...) asparagine glycans are attached at residues Asn72, Asn140, and Asn241. 4 disulfides stabilise this stretch: Cys309-Cys318, Cys317-Cys380, Cys346-Cys411, and Cys350-Cys413.

It belongs to the TGF-beta family. Interacts with the serine proteases, HTRA1 and HTRA3. Interacts with ASPN. Interacts with MFAP5. In terms of assembly, interacts with Transforming growth factor beta-2 (TGF-beta-2) chain; interaction is non-covalent and maintains (TGF-beta-2) in a latent state. Interacts with LRRC32/GARP; leading to regulate activation of TGF-beta-2. Interacts with NREP; the interaction results in a decrease in TGFB2 autoinduction. As to quaternary structure, transforming growth factor beta-2: Homodimer; disulfide-linked. Transforming growth factor beta-2: Interacts with TGF-beta receptors (TGFBR1 and TGFBR2), leading to signal transduction. Post-translationally, the precursor proprotein is cleaved in the Golgi apparatus to form Transforming growth factor beta-2 (TGF-beta-2) and Latency-associated peptide (LAP) chains, which remain non-covalently linked, rendering TGF-beta-2 inactive.

It localises to the secreted. The protein localises to the extracellular space. It is found in the extracellular matrix. In terms of biological role, precursor of the Latency-associated peptide (LAP) and Transforming growth factor beta-2 (TGF-beta-2) chains, which constitute the regulatory and active subunit of TGF-beta-2, respectively. Required to maintain the Transforming growth factor beta-2 (TGF-beta-2) chain in a latent state during storage in extracellular matrix. Associates non-covalently with TGF-beta-2 and regulates its activation via interaction with 'milieu molecules', such as LTBP1 and LRRC32/GARP, that control activation of TGF-beta-2. Its function is as follows. Multifunctional protein that regulates various processes such as angiogenesis and heart development. Activation into mature form follows different steps: following cleavage of the proprotein in the Golgi apparatus, Latency-associated peptide (LAP) and Transforming growth factor beta-2 (TGF-beta-2) chains remain non-covalently linked rendering TGF-beta-2 inactive during storage in extracellular matrix. At the same time, LAP chain interacts with 'milieu molecules', such as LTBP1 and LRRC32/GARP, that control activation of TGF-beta-2 and maintain it in a latent state during storage in extracellular milieus. Once activated following release of LAP, TGF-beta-2 acts by binding to TGF-beta receptors (TGFBR1 and TGFBR2), which transduce signal. In Sus scrofa (Pig), this protein is Transforming growth factor beta-2 proprotein (TGFB2).